The following is a 1075-amino-acid chain: DNA-directed RNA polymerase subunit beta (1075 aa).

The protein belongs to the RNA polymerase beta chain family. As to quaternary structure, in plastids the minimal PEP RNA polymerase catalytic core is composed of four subunits: alpha, beta, beta', and beta''. When a (nuclear-encoded) sigma factor is associated with the core the holoenzyme is formed, which can initiate transcription.

It is found in the plastid. It localises to the chloroplast. The catalysed reaction is RNA(n) + a ribonucleoside 5'-triphosphate = RNA(n+1) + diphosphate. In terms of biological role, DNA-dependent RNA polymerase catalyzes the transcription of DNA into RNA using the four ribonucleoside triphosphates as substrates. This is DNA-directed RNA polymerase subunit beta from Zea mays (Maize).